Consider the following 155-residue polypeptide: RING finger protein 122 (155 aa).

The chain crosses the membrane as a helical span at residues 40–60; it reads VIFGTGIFVFMLSLIFCCYFI. The RING-type; atypical zinc-finger motif lies at 93–134; it reads CAVCLEDFKGKDELGVLPCQHAFHRKCLVKWLEVRCVCPMCN.

Widely expressed in several tissues and cell lines.

Its subcellular location is the golgi apparatus. The protein localises to the endoplasmic reticulum. It is found in the membrane. May induce necrosis and apoptosis. May play a role in cell viability. This is RING finger protein 122 (RNF122) from Homo sapiens (Human).